The sequence spans 364 residues: Phosphoserine aminotransferase (364 aa).

Position 41 (Arg41) interacts with L-glutamate. Pyridoxal 5'-phosphate is bound by residues 75 to 76 (AS), Trp100, Thr155, Asp175, and Gln198. N6-(pyridoxal phosphate)lysine is present on Lys199. 239-240 (NT) is a binding site for pyridoxal 5'-phosphate.

The protein belongs to the class-V pyridoxal-phosphate-dependent aminotransferase family. SerC subfamily. In terms of assembly, homodimer. It depends on pyridoxal 5'-phosphate as a cofactor.

Its subcellular location is the cytoplasm. It carries out the reaction O-phospho-L-serine + 2-oxoglutarate = 3-phosphooxypyruvate + L-glutamate. The enzyme catalyses 4-(phosphooxy)-L-threonine + 2-oxoglutarate = (R)-3-hydroxy-2-oxo-4-phosphooxybutanoate + L-glutamate. It functions in the pathway amino-acid biosynthesis; L-serine biosynthesis; L-serine from 3-phospho-D-glycerate: step 2/3. Its function is as follows. Catalyzes the reversible conversion of 3-phosphohydroxypyruvate to phosphoserine and of 3-hydroxy-2-oxo-4-phosphonooxybutanoate to phosphohydroxythreonine. The chain is Phosphoserine aminotransferase from Streptococcus uberis (strain ATCC BAA-854 / 0140J).